The primary structure comprises 145 residues: D-aminoacyl-tRNA deacylase (145 aa).

The short motif at 137-138 is the Gly-cisPro motif, important for rejection of L-amino acids element; sequence GP.

It belongs to the DTD family. In terms of assembly, homodimer.

It is found in the cytoplasm. The enzyme catalyses glycyl-tRNA(Ala) + H2O = tRNA(Ala) + glycine + H(+). It catalyses the reaction a D-aminoacyl-tRNA + H2O = a tRNA + a D-alpha-amino acid + H(+). Its function is as follows. An aminoacyl-tRNA editing enzyme that deacylates mischarged D-aminoacyl-tRNAs. Also deacylates mischarged glycyl-tRNA(Ala), protecting cells against glycine mischarging by AlaRS. Acts via tRNA-based rather than protein-based catalysis; rejects L-amino acids rather than detecting D-amino acids in the active site. By recycling D-aminoacyl-tRNA to D-amino acids and free tRNA molecules, this enzyme counteracts the toxicity associated with the formation of D-aminoacyl-tRNA entities in vivo and helps enforce protein L-homochirality. The chain is D-aminoacyl-tRNA deacylase from Klebsiella pneumoniae subsp. pneumoniae (strain ATCC 700721 / MGH 78578).